A 396-amino-acid chain; its full sequence is Histidine-rich glycoprotein (396 aa).

Cystatin domains lie at 1–102 and 103–169; these read AVNP…SALT and NMRA…RFSA. 6 cysteine pairs are disulfide-bonded: Cys-7–Cys-375, Cys-56–Cys-67, Cys-77–Cys-92, Cys-123–Cys-297, Cys-137–Cys-160, and Cys-212–Cys-242. An N-linked (GlcNAc...) asparagine; partial glycan is attached at Asn-70. N-linked (GlcNAc...) asparagine glycosylation is found at Asn-91 and Asn-122. The interval 176–322 is disordered; that stretch reads RPFHSGEHEH…GPGKGHFRFH (147 aa). The segment covering 197 to 208 has biased composition (basic and acidic residues); sequence GSKDHGHPHESY. Asn-220 carries an N-linked (GlcNAc...) asparagine glycan. The span at 233 to 246 shows a compositional bias: pro residues; sequence LPFPPPGLRCPHPP. Residues 255–265 show a composition bias toward basic and acidic residues; the sequence is PPHDHSSDEHH. Basic residues predominate over residues 266–284; that stretch reads PHGHHPHGHHPHGHHPHGH. Over residues 285–296 the composition is skewed to basic and acidic residues; sequence HPPDNDFYDHGP. The segment covering 304–322 has biased composition (basic residues); the sequence is PPPRHSKERGPGKGHFRFH. Phosphoserine is present on Ser-309.

As to quaternary structure, interacts (via the HRR domain) with TPM1; the interaction appears to contribute to the antiangiogenic properties of the HRR domain. Interacts with THBS1 (via the TSP type I repeats); the interaction blocks the antiangiogenic effect of THBS1 with CD36. Interacts with PLG (via its Kringle domains); the interaction tethers PLG to the cell surface and enhances its activation. Interacts with THBS2; the interaction blocks the antiangiogenic effect of THBS2 with CD36. Interacts with HPSE; the interaction is enhanced at acidic pH, partially inhibits binding of HPSE to cell surface receptors and modulates its enzymatic activity. Interacts (via the HRR domain) with TMP1; the interaction partially mediates the antiangiogenic properties of HRG. Interacts with kappa and lambda light chains of IgG molecules. Interacts with ATP5F1A; the interaction occurs on the surface of T-cells and alters their cell morphology in concert with CONA. Binds IgG molecules containing kappa and lambda light chains and inhibits the formation of insoluble immunoglobulin complexes. Interacts with F12; the interaction, which is enhanced in the presence of zinc ions and inhibited by heparin-binding to HRG, inhibits factor XII autoactivation and contact-initiated coagulation. N-glycosylated. Post-translationally, proteolytic cleavage produces several HRG fragments which are mostly disulfide-linked and, therefore, not released. On platelet activation, may release a 33 kDa antiangiogenic peptide which encompasses the HRR.

It is found in the secreted. Plasma glycoprotein that binds a number of ligands such as heme, heparin, heparan sulfate, thrombospondin, plasminogen, and divalent metal ions. Inhibits rosette formation. Acts as an adapter protein and implicated in regulating many processes such as immune complex and pathogen clearance, cell adhesion, angiogenesis, coagulation and fibrinolysis. Mediates clearance of necrotic cells through enhancing the phagocytosis of necrotic cells in a heparan sulfate-dependent pathway. This process can be regulated by the presence of certain HRG ligands such as heparin and zinc ions. Binds to IgG subclasses of immunoglobins containing kappa and lambda light chains with different affinities regulating their clearance and inhibiting the formation of insoluble immune complexes. Tethers plasminogen to the cell surface. Binds T-cells and alters the cell morphology. Modulates angiogenesis by blocking the CD6-mediated antiangiongenic effect of thrombospondins, THBS1 and THBS2. This is Histidine-rich glycoprotein (HRG) from Bos taurus (Bovine).